A 473-amino-acid chain; its full sequence is H(+)/Cl(-) exchange transporter ClcA (473 aa).

At 1-32 (MKTDTPTFEAQQIVRLRRGRLIRRLVQRDKTP) the chain is on the cytoplasmic side. The chain crosses the membrane as a helical span at residues 33 to 69 (LAILLMAAVVGTLTGLVGVAFEKAVSWVQNMRIGALV). The Periplasmic segment spans residues 70-76 (QVADHAF). The helical transmembrane segment at 77 to 100 (LLWPLAFILSALLAMVGYFLVRKF) threads the bilayer. A Selectivity filter part_1 motif is present at residues 106–110 (GSGIP). S107 contacts chloride. Positions 109–116 (IPEIEGAL) form an intramembrane region, helical. The Cytoplasmic segment spans residues 117-123 (EELRPVR). 2 helical membrane-spanning segments follow: residues 124 to 141 (WWRV…TLGA) and 148 to 166 (EGPT…LDVF). A Selectivity filter part_2 motif is present at residues 146–150 (GREGP). The Cytoplasmic portion of the chain corresponds to 167 to 176 (RMRSAEARHT). Intramembrane regions (helical) lie at residues 177–189 (LLAT…LSAA) and 193–201 (PLAGILFII). The Cytoplasmic segment spans residues 202–214 (EEMRPQFRYNLIS). A helical membrane pass occupies residues 215–232 (IKAVFTGVIMSSIVFRIF). Residues 233–252 (NGEAPIIEVGKLSNAPVNTL) lie on the Periplasmic side of the membrane. A helical transmembrane segment spans residues 253–281 (WLYLVLGIIFGCVGPVFNTLVLRTQDMFQ). Residues 282–287 (RFHGGE) are Cytoplasmic-facing. Residues 288 to 309 (IKKWVLMGGAIGGLCGILGLIE) form a helical membrane-spanning segment. The Periplasmic segment spans residues 310 to 329 (PEAAGGGFNLIPIAAAGNFS). 2 helical membrane-spanning segments follow: residues 330–349 (VGLL…LCFS) and 355–376 (GIFA…MAAA). A Selectivity filter part_3 motif is present at residues 355-359 (GIFAP). Positions 356 and 357 each coordinate chloride. Residues 377–386 (VLFPQYHLEA) are Periplasmic-facing. Positions 387–401 (GTFAIAGMGALMAAS) form an intramembrane region, helical. Residues 402 to 404 (VRA) constitute an intramembrane region (note=Loop between two helices). Residues 405-416 (PLTGIVLVLEMT) constitute an intramembrane region (helical). Residues 417-421 (DNYQL) constitute an intramembrane region (note=Loop between two helices). Residues 422-438 (ILPMIITCLGATLLAQF) traverse the membrane as a helical segment. Residues 439 to 473 (LGGKPLYSTILARTLAKQDAEQAAKNQSTPAGENT) lie on the Cytoplasmic side of the membrane. A chloride-binding site is contributed by Y445.

Belongs to the chloride channel (TC 2.A.49) family. ClcA subfamily. As to quaternary structure, homodimer.

The protein localises to the cell inner membrane. The enzyme catalyses 2 chloride(in) + H(+)(out) = 2 chloride(out) + H(+)(in). Proton-coupled chloride transporter. Functions as antiport system and exchanges two chloride ions for 1 proton. Probably acts as an electrical shunt for an outwardly-directed proton pump that is linked to amino acid decarboxylation, as part of the extreme acid resistance (XAR) response. The sequence is that of H(+)/Cl(-) exchange transporter ClcA from Salmonella arizonae (strain ATCC BAA-731 / CDC346-86 / RSK2980).